A 778-amino-acid chain; its full sequence is Probable glutamine--tRNA ligase (778 aa).

Basic and acidic residues predominate over residues 188-205 (LKPQTKANDKPKAAKPKA). Positions 188–219 (LKPQTKANDKPKAAKPKAEVTPAAQTAEAASD) are disordered. Residues 273–283 (PEPNGILHIGH) carry the 'HIGH' region motif. ATP-binding positions include 274–276 (EPN) and 280–286 (HIGHAKA). The L-glutamine site is built by Asp306 and Tyr441. Residues Thr460, 489 to 490 (RL), and 497 to 499 (VSK) contribute to the ATP site. The 'KMSKS' region motif lies at 496-500 (LVSKR).

Belongs to the class-I aminoacyl-tRNA synthetase family.

It catalyses the reaction tRNA(Gln) + L-glutamine + ATP = L-glutaminyl-tRNA(Gln) + AMP + diphosphate. The protein is Probable glutamine--tRNA ligase of Drosophila melanogaster (Fruit fly).